Reading from the N-terminus, the 267-residue chain is NAD kinase (267 aa).

D45 (proton acceptor) is an active-site residue. NAD(+) is bound by residues 45-46 (DG), 121-122 (NE), R147, D149, 160-165 (TAYSKS), and A184.

It belongs to the NAD kinase family. A divalent metal cation serves as cofactor.

The protein resides in the cytoplasm. The catalysed reaction is NAD(+) + ATP = ADP + NADP(+) + H(+). Its function is as follows. Involved in the regulation of the intracellular balance of NAD and NADP, and is a key enzyme in the biosynthesis of NADP. Catalyzes specifically the phosphorylation on 2'-hydroxyl of the adenosine moiety of NAD to yield NADP. This is NAD kinase from Lactobacillus acidophilus (strain ATCC 700396 / NCK56 / N2 / NCFM).